The chain runs to 213 residues: Motile sperm domain-containing protein 1 (213 aa).

The 128-residue stretch at Pro-16–Phe-143 folds into the MSP domain. The next 2 membrane-spanning stretches (helical) occupy residues Ser-159–Gly-179 and Leu-191–Phe-211. A Nuclear export signal motif is present at residues Leu-205–Met-208.

It localises to the endoplasmic reticulum membrane. Its subcellular location is the golgi apparatus membrane. Plays a role in differentiation and/or proliferation of mesenchymal stem cells. Proposed to be involved in epithelial-to-mesenchymal transition (EMT). However, another study suggests that it is not required for EMT or stem cell self-renewal and acts during later stages of differentiation. The polypeptide is Motile sperm domain-containing protein 1 (MOSPD1) (Bos taurus (Bovine)).